The sequence spans 639 residues: tRNA uridine 5-carboxymethylaminomethyl modification enzyme MnmG (639 aa).

15 to 20 (GAGHAG) is a binding site for FAD. 276-290 (GPRYCPSIEDKIVRF) is an NAD(+) binding site.

Belongs to the MnmG family. In terms of assembly, homodimer. Heterotetramer of two MnmE and two MnmG subunits. It depends on FAD as a cofactor.

The protein localises to the cytoplasm. In terms of biological role, NAD-binding protein involved in the addition of a carboxymethylaminomethyl (cmnm) group at the wobble position (U34) of certain tRNAs, forming tRNA-cmnm(5)s(2)U34. In Streptococcus gordonii (strain Challis / ATCC 35105 / BCRC 15272 / CH1 / DL1 / V288), this protein is tRNA uridine 5-carboxymethylaminomethyl modification enzyme MnmG.